The primary structure comprises 308 residues: Putative T-box protein 30/42 (308 aa).

Positions 11–192 form a DNA-binding region, T-box; it reads MSNEELWKER…KHSTFGNRSE (182 aa). The interval 186 to 220 is disordered; sequence TFGNRSEGGIKRKTSDAAGQLPSKRSSKKPVKKDV.

It is found in the nucleus. In terms of biological role, involved in the regulatory network to control embryonic patterning and morphogenesis. Implicated in negatively regulating vab-7 expression at the anterior of embryos. This chain is Putative T-box protein 30/42 (tbx-30), found in Caenorhabditis elegans.